Consider the following 520-residue polypeptide: 6-phosphofructo-2-kinase/fructose-2,6-bisphosphatase 3 (520 aa).

A 6-phosphofructo-2-kinase region spans residues 1-245; sequence MPLELTQSRV…VYYLMNIHVQ (245 aa). 42–50 serves as a coordination point for ATP; that stretch reads GLPARGKTY. Residues arginine 75 and arginine 99 each contribute to the beta-D-fructose 6-phosphate site. Aspartate 125 is an active-site residue. Positions 127 and 133 each coordinate beta-D-fructose 6-phosphate. The active site involves cysteine 155. 164–169 is a binding site for ATP; sequence NIMEVK. Positions 169, 190, and 194 each coordinate beta-D-fructose 6-phosphate. Residues 246-520 are fructose-2,6-bisphosphatase; the sequence is PRTIYLCRHG…RSSADSSRKH (275 aa). Arginine 253 lines the beta-D-fructose 2,6-bisphosphate pocket. Histidine 254 (tele-phosphohistidine intermediate) is an active-site residue. Beta-D-fructose 2,6-bisphosphate contacts are provided by asparagine 260 and glycine 266. Glutamate 323 functions as the Proton donor/acceptor in the catalytic mechanism. Beta-D-fructose 2,6-bisphosphate is bound by residues tyrosine 334, arginine 348, lysine 352, tyrosine 363, glutamine 389, and arginine 393. 345–348 is a binding site for ATP; sequence YALR. Residues 389 to 393 and tyrosine 425 each bind ATP; that span reads QAVLR. Residues 443-520 form a disordered region; the sequence is RERSEDAKKG…RSSADSSRKH (78 aa). At serine 461 the chain carries Phosphoserine; by AMPK. Threonine 463 carries the phosphothreonine modification. Position 467 is a phosphoserine (serine 467). The residue at position 471 (threonine 471) is a Phosphothreonine; by PKC. Positions 502–520 are enriched in polar residues; it reads LPGQNMKGSRSSADSSRKH.

It in the C-terminal section; belongs to the phosphoglycerate mutase family. As to quaternary structure, homodimer. Forms a heterodimer with PFKFB2. Phosphorylation by AMPK stimulates activity. In terms of tissue distribution, ubiquitous.

It carries out the reaction beta-D-fructose 2,6-bisphosphate + H2O = beta-D-fructose 6-phosphate + phosphate. The enzyme catalyses beta-D-fructose 6-phosphate + ATP = beta-D-fructose 2,6-bisphosphate + ADP + H(+). Its function is as follows. Catalyzes both the synthesis and degradation of fructose 2,6-bisphosphate. The sequence is that of 6-phosphofructo-2-kinase/fructose-2,6-bisphosphatase 3 (PFKFB3) from Homo sapiens (Human).